Consider the following 530-residue polypeptide: T-complex protein 1 subunit zeta-2 (530 aa).

Belongs to the TCP-1 chaperonin family. As to quaternary structure, component of the chaperonin-containing T-complex (TRiC), a heterooligomeric complex of about 850 to 900 kDa that forms two stacked rings, 12 to 16 nm in diameter. In terms of tissue distribution, testis-specific.

The protein localises to the cytoplasm. Component of the chaperonin-containing T-complex (TRiC), a molecular chaperone complex that assists the folding of proteins upon ATP hydrolysis. The polypeptide is T-complex protein 1 subunit zeta-2 (CCT6B) (Homo sapiens (Human)).